The following is a 396-amino-acid chain: MKIKTGARILALSALTTMMFSASALAKIEEGKLVIWINGDKGYNGLAEVGKKFEKDTGIKVSVEHPDKLEEKFPQVAATGDGPDIIFWAHDRFGAYAQSGLLAEITPDKAFQDKLYPFTWDAVRYNGKLIAYPVAVEALSLIYNKDLVPNPPKTWEEIPALDKALKAKGKSALMFNLQEPYFTWPLIAADGGYAFKFENGKYDVKNVGVDSAGAKAGLTFLVDLIKNKHMNADTDYSIAEAAFNKGETAMTINGPWAWSNIDKSKVNYGVTLLPTFKGKPSKPFVGVLSAGINAASPNKELAKEFLENYLMTDPGLEAVNNDKPLGAVAVKSFQEKLEKDPRIAATMANAQKGEIMPNIPQMSAFWYAVRTAVINAASARQTVDAALKDAQGRITK.

Residues M1–A26 form the signal peptide.

The protein belongs to the bacterial solute-binding protein 1 family. As to quaternary structure, the complex is composed of two ATP-binding proteins (MalK), two transmembrane proteins (MalG and MalF) and a solute-binding protein (MalE).

Its subcellular location is the periplasm. Its function is as follows. Part of the ABC transporter complex MalEFGK involved in maltose/maltodextrin import. Binds maltose and higher maltodextrins. The protein is Maltose/maltodextrin-binding periplasmic protein (malE) of Klebsiella aerogenes (Enterobacter aerogenes).